Here is a 557-residue protein sequence, read N- to C-terminus: 2-succinyl-5-enolpyruvyl-6-hydroxy-3-cyclohexene-1-carboxylate synthase (557 aa).

It belongs to the TPP enzyme family. MenD subfamily. As to quaternary structure, homodimer. Mg(2+) is required as a cofactor. Mn(2+) serves as cofactor. It depends on thiamine diphosphate as a cofactor.

It catalyses the reaction isochorismate + 2-oxoglutarate + H(+) = 5-enolpyruvoyl-6-hydroxy-2-succinyl-cyclohex-3-ene-1-carboxylate + CO2. It participates in quinol/quinone metabolism; 1,4-dihydroxy-2-naphthoate biosynthesis; 1,4-dihydroxy-2-naphthoate from chorismate: step 2/7. The protein operates within quinol/quinone metabolism; menaquinone biosynthesis. In terms of biological role, catalyzes the thiamine diphosphate-dependent decarboxylation of 2-oxoglutarate and the subsequent addition of the resulting succinic semialdehyde-thiamine pyrophosphate anion to isochorismate to yield 2-succinyl-5-enolpyruvyl-6-hydroxy-3-cyclohexene-1-carboxylate (SEPHCHC). The protein is 2-succinyl-5-enolpyruvyl-6-hydroxy-3-cyclohexene-1-carboxylate synthase of Yersinia enterocolitica serotype O:8 / biotype 1B (strain NCTC 13174 / 8081).